The following is an 87-amino-acid chain: Antitoxin epsilon (87 aa).

It belongs to the epsilon antitoxin family. In terms of assembly, in the presence of the zeta toxin, forms an inactive PezA(2)PezT(2) heterotetramer.

Antitoxin component of a type II toxin-antitoxin (TA) system. Neutralizes the toxic effect of cognate zeta toxin. Part of a postsegregational killing (PSK) system involved in the killing of plasmid-free cells. Continuous synthesis of the epsilon antitoxin is required to counteract the zeta toxin. The protein is Antitoxin epsilon of Lactococcus lactis subsp. lactis (Streptococcus lactis).